A 157-amino-acid polypeptide reads, in one-letter code: Baculoviral IAP repeat-containing protein 5.2-A (157 aa).

The BIR repeat unit spans residues 31 to 101; that stretch reads RLRTFSNWPF…KHSPSCLFIA (71 aa). Threonine 47 carries the post-translational modification Phosphothreonine; by CDK1. The Zn(2+) site is built by cysteine 70, cysteine 73, histidine 90, and cysteine 97.

The protein belongs to the IAP family. In terms of assembly, component of the CPC at least composed of survivin/birc5, incenp, cdca8/borealin and/or cdca9/dasra-A, and aurkb/aurora-B. Interacts directly with incenp (via N-terminus). Interacts with rxra; the interaction is stronger in the absence of 9-cis retinoic acids. Ubiquitination is required for centrosome-targeting. As to expression, highly expressed in vascular endothelial cells of tadpoles.

The protein localises to the cytoplasm. It localises to the nucleus. The protein resides in the chromosome. Its subcellular location is the centromere. It is found in the cytoskeleton. The protein localises to the spindle. Its function is as follows. Component of the chromosomal passenger complex (CPC), a complex that acts as a key regulator of mitosis. The CPC complex has essential functions at the centromere in ensuring correct chromosome alignment and segregation and is required for chromatin-induced microtubule stabilization and spindle assembly. Does not appear to exhibit anti-apoptotic activity. Plays a role in increasing blood vessel size during development. The chain is Baculoviral IAP repeat-containing protein 5.2-A (birc5.2-a) from Xenopus laevis (African clawed frog).